The primary structure comprises 1161 residues: Perforin-like protein 1 (1161 aa).

The helical transmembrane segment at 67–86 (LWITFVCLLTLHMFGLSSAV) threads the bilayer. Residues 154–329 (PEALNEVPTK…LGDSSALDLF (176 aa)) form a disordered region. Composition is skewed to basic and acidic residues over residues 162–177 (TKVERNEFTEKGDKTE) and 184–194 (ADHKSLLEGRS). Residues 201–211 (PDDDFDFLFED) show a composition bias toward acidic residues. Residues 222–234 (NKGTSSDETSPGD) show a composition bias toward polar residues. A compositionally biased stretch (low complexity) spans 238 to 249 (GEGSSASDSLLS). The N-linked (GlcNAc...) asparagine glycan is linked to asparagine 257. Basic residues predominate over residues 264 to 283 (NQKRITHPKSKAQHQKKVTK). Residues 309–322 (NTQADDSQRQSLGD) are compositionally biased toward polar residues. Asparagine 344 carries N-linked (GlcNAc...) asparagine glycosylation. Positions 353–381 (AANDGGLFSSSGMGPTGASDETSANPLGS) are disordered. Residues 361–378 (SSSGMGPTGASDETSANP) show a composition bias toward polar residues. Residues 463-817 (LSAVYTKATK…LTPQDLSALT (355 aa)) enclose the MACPF domain. A disulfide bridge connects residues cysteine 539 and cysteine 602. N-linked (GlcNAc...) asparagine glycosylation occurs at asparagine 550. The chain crosses the membrane as a beta stranded span at residues 554–589 (YQNELSVDASLQGGDPIGLNSFSASTGYRDFAKEVS). Residue asparagine 618 is glycosylated (N-linked (GlcNAc...) asparagine). Cysteine 643 and cysteine 657 are disulfide-bonded. A beta stranded membrane pass occupies residues 694–740 (RSEVEKMRNMGIDVKTQLKMQLGGVSGGAGQGTSSKKNQSSSEYQMN). Residues 716-736 (GGVSGGAGQGTSSKKNQSSSE) are disordered. Asparagine 755 carries N-linked (GlcNAc...) asparagine glycosylation. Intrachain disulfides connect cysteine 845/cysteine 900, cysteine 874/cysteine 881, cysteine 928/cysteine 981, cysteine 957/cysteine 964, cysteine 1019/cysteine 1080, and cysteine 1047/cysteine 1054. 3 N-linked (GlcNAc...) asparagine glycosylation sites follow: asparagine 1022, asparagine 1050, and asparagine 1111. Positions 1094–1149 (VGKAKGNGKKKKGKKGKNKTNAPNEVEEGQQLGADSPSQVSVPADADSGPTSKTMS) are disordered. Residues 1099–1111 (GNGKKKKGKKGKN) show a composition bias toward basic residues.

Belongs to the MPEG1 family. As to quaternary structure, homooligomer; forms a homooligomeric pore.

Its subcellular location is the parasitophorous vacuole membrane. It localises to the cytoplasmic vesicle. The protein localises to the secretory vesicle. It is found in the microneme membrane. In terms of biological role, pore-forming protein that promotes parasite exit from host cells: mediates formation of a pore in the parasitophorous vacuolar membrane, leading to membrane permeabilization, thereby facilitating parasite egress from host cells. May also form a pore in the host plasma membrane. Preferentially binds inner leaflet lipids, such as phosphatidylethanolamine (PE) or phosphatidylserine (PS). The polypeptide is Perforin-like protein 1 (Toxoplasma gondii (strain ATCC 50861 / VEG)).